Reading from the N-terminus, the 148-residue chain is 1,4-dihydroxy-2-naphthoyl-CoA hydrolase (148 aa).

Asp15 is an active-site residue.

This sequence belongs to the 4-hydroxybenzoyl-CoA thioesterase family. DHNA-CoA hydrolase subfamily.

It catalyses the reaction 1,4-dihydroxy-2-naphthoyl-CoA + H2O = 1,4-dihydroxy-2-naphthoate + CoA + H(+). Its pathway is cofactor biosynthesis; phylloquinone biosynthesis. It participates in quinol/quinone metabolism; 1,4-dihydroxy-2-naphthoate biosynthesis; 1,4-dihydroxy-2-naphthoate from chorismate: step 7/7. In terms of biological role, catalyzes the hydrolysis of 1,4-dihydroxy-2-naphthoyl-CoA (DHNA-CoA) to 1,4-dihydroxy-2-naphthoate (DHNA), a reaction involved in phylloquinone (vitamin K1) biosynthesis. This Nostoc punctiforme (strain ATCC 29133 / PCC 73102) protein is 1,4-dihydroxy-2-naphthoyl-CoA hydrolase.